Reading from the N-terminus, the 189-residue chain is Probable chorismate pyruvate-lyase (189 aa).

Substrate-binding residues include Arg74, Leu113, and Glu175.

It belongs to the UbiC family.

The protein resides in the cytoplasm. It catalyses the reaction chorismate = 4-hydroxybenzoate + pyruvate. Its pathway is cofactor biosynthesis; ubiquinone biosynthesis. Functionally, removes the pyruvyl group from chorismate, with concomitant aromatization of the ring, to provide 4-hydroxybenzoate (4HB) for the ubiquinone pathway. This is Probable chorismate pyruvate-lyase from Azoarcus sp. (strain BH72).